We begin with the raw amino-acid sequence, 319 residues long: Olfactory receptor 8U3 (319 aa).

Residues 1–25 (MAEVNISYVSEFILKGITDRPELQA) are Extracellular-facing. The N-linked (GlcNAc...) asparagine glycan is linked to asparagine 5. The helical transmembrane segment at 26 to 46 (PCFVMFLTIYLVTVLGNLGLI) threads the bilayer. At 47 to 54 (VIIRVDSR) the chain is on the cytoplasmic side. The chain crosses the membrane as a helical span at residues 55-75 (LHTPMYFFLSHLAFVDLCYSS). At 76–99 (AITPKMMVNFVVERNTIPFHACAT) the chain is on the extracellular side. A disulfide bridge connects residues cysteine 97 and cysteine 189. Residues 100–120 (QLGCFLTFMITECFLLASMAY) form a helical membrane-spanning segment. Topologically, residues 121 to 133 (DRYVAICSPLHYS) are cytoplasmic. The chain crosses the membrane as a helical span at residues 134–154 (TLMSKRVCIQLVAVPYVYSFL). The Extracellular segment spans residues 155-196 (VALFHTIITFRLTYCGPNVINHFYCDDLPLLALSCSDTHMKE). The chain crosses the membrane as a helical span at residues 197 to 217 (ILIFAFAGFDMICSSSIVLTS). Topologically, residues 218–237 (YLFIIAAILRIRSTQGRRKA) are cytoplasmic. Residues 238 to 258 (ISTCGSHMVAVTIFYGTLIFM) form a helical membrane-spanning segment. At 259–271 (YLQPKSNHSLDTD) the chain is on the extracellular side. Residue asparagine 265 is glycosylated (N-linked (GlcNAc...) asparagine). A helical transmembrane segment spans residues 272-292 (KMASVFYTVVIPMLNPLIYSL). Residues 293-319 (RNKEVKDASKKALDKGYETLKILRLSK) lie on the Cytoplasmic side of the membrane.

It belongs to the G-protein coupled receptor 1 family.

The protein localises to the cell membrane. Its function is as follows. Potential odorant receptor. The sequence is that of Olfactory receptor 8U3 from Mus musculus (Mouse).